Consider the following 218-residue polypeptide: Capsid protein (218 aa).

M1 is modified (N-acetylmethionine; by host). Residues 1–10 are compositionally biased toward low complexity; the sequence is MDKSDSASAG. The segment at 1–28 is disordered; sequence MDKSDSASAGRNRRRRPRRGSRSASSSA. Over residues 11 to 21 the composition is skewed to basic residues; the sequence is RNRRRRPRRGS.

The protein belongs to the cucumovirus capsid protein family.

It localises to the virion. Capsid protein. Probably binds RNA and plays a role in packaging. This is Capsid protein from Cucumber mosaic virus (strain M48) (CMV).